The following is a 335-amino-acid chain: Transcription factor E2F5 (335 aa).

Low complexity predominate over residues 1 to 18 (MAAAEPTSSAQPTPQAQA). The tract at residues 1-40 (MAAAEPTSSAQPTPQAQAQPPPHGAPSSQPSAALAGGSSR) is disordered. A DNA-binding region spans residues 37–108 (GSSRHEKSLG…KNSIQWKGVG (72 aa)). A leucine-zipper region spans residues 66–88 (LKAAADTLAVRQKRRIYDITNVL). The DEF box motif lies at 71 to 108 (DTLAVRQKRRIYDITNVLEGIDLIEKKSKNSIQWKGVG). A dimerization region spans residues 109-205 (AGCNTKEVID…GQNGQKKYQI (97 aa)). Residues 226 to 285 (SKPVVFPVPPPDDLTQPSSQSSTSVTPQKSTMAAQNLPEQHVSERSQTFQQTPAAEVSSG) form a disordered region. The span at 238–256 (DLTQPSSQSSTSVTPQKST) shows a compositional bias: low complexity. Residues 277–335 (TPAAEVSSGSISGDIIDELMSSDVFPLLRLSPTPADDYNFNLDDNEGVCDLFDVQILNY) form a transactivation region. The interval 312–329 (DDYNFNLDDNEGVCDLFD) is RBL2 association.

This sequence belongs to the E2F/DP family. In terms of assembly, component of the DRTF1/E2F transcription factor complex. Binds cooperatively with DP-1 to E2F sites. Interaction with retinoblastoma protein RB1 or proteins RBL1 and RBL2 inhibits the E2F transactivation domain. Component of the DREAM complex (also named LINC complex) at least composed of E2F4, E2F5, LIN9, LIN37, LIN52, LIN54, MYBL1, MYBL2, RBL1, RBL2, RBBP4, TFDP1 and TFDP2. The complex exists in quiescent cells where it represses cell cycle-dependent genes. It dissociates in S phase when LIN9, LIN37, LIN52 and LIN54 form a subcomplex that binds to MYBL2.

It is found in the nucleus. Transcriptional activator that binds to E2F sites, these sites are present in the promoter of many genes whose products are involved in cell proliferation. May mediate growth factor-initiated signal transduction. It is likely involved in the early responses of resting cells to growth factor stimulation. Specifically required for multiciliate cell differentiation: together with MCIDAS and E2F5, binds and activate genes required for centriole biogenesis. The protein is Transcription factor E2F5 (E2f5) of Mus musculus (Mouse).